The primary structure comprises 620 residues: Chaperone protein HscA homolog (620 aa).

It belongs to the heat shock protein 70 family.

Its function is as follows. Chaperone involved in the maturation of iron-sulfur cluster-containing proteins. Has a low intrinsic ATPase activity which is markedly stimulated by HscB. The polypeptide is Chaperone protein HscA homolog (Neisseria meningitidis serogroup A / serotype 4A (strain DSM 15465 / Z2491)).